We begin with the raw amino-acid sequence, 218 residues long: Putative glutamine transport system permease protein GlnP (218 aa).

One can recognise an ABC transmembrane type-1 domain in the interval 19–208; it reads TLVTLKYSII…ILVMLISFIA (190 aa). 4 helical membrane passes run 25-45, 57-79, 86-108, and 187-207; these read YSIIAVILGLVIGMLLAICKV, FYTSIFRGTPLLVQLSIIYFAAP, FSVFMAGVISFALNSGAYVSEVI, and FFPMLIAACCYYILVMLISFI.

Belongs to the binding-protein-dependent transport system permease family. HisMQ subfamily.

The protein localises to the cell inner membrane. Functionally, part of the binding-protein-dependent transport system for glutamine; probably responsible for the translocation of the substrate across the membrane. In Rickettsia typhi (strain ATCC VR-144 / Wilmington), this protein is Putative glutamine transport system permease protein GlnP (glnP).